The sequence spans 535 residues: Dual specificity calcium/calmodulin-dependent 3',5'-cyclic nucleotide phosphodiesterase 1A (535 aa).

Calmodulin-binding regions lie at residues 24–44 (TEKM…QLER) and 114–137 (EKPK…MYRK). Residues 142–522 (VGLAYPAAVI…ERWKELAAQE (381 aa)) form the PDEase domain. His-219 (proton donor) is an active-site residue. 4 residues coordinate Zn(2+): His-223, His-259, Asp-260, and Asp-366. Residue Asp-260 participates in Mg(2+) binding.

Belongs to the cyclic nucleotide phosphodiesterase family. PDE1 subfamily. Homodimer. Interacts with YWHAZ. Requires Zn(2+) as cofactor. Mg(2+) serves as cofactor. Several tissues, including brain, kidney, testes and heart.

It catalyses the reaction a nucleoside 3',5'-cyclic phosphate + H2O = a nucleoside 5'-phosphate + H(+). The catalysed reaction is 3',5'-cyclic GMP + H2O = GMP + H(+). It carries out the reaction 3',5'-cyclic AMP + H2O = AMP + H(+). With respect to regulation, type I PDE are activated by the binding of calmodulin in the presence of Ca(2+). Calcium/calmodulin-dependent cyclic nucleotide phosphodiesterase with a dual specificity for the second messengers cGMP and cAMP, which are key regulators of many important physiological processes. Has a higher efficiency with cGMP compared to cAMP. This Homo sapiens (Human) protein is Dual specificity calcium/calmodulin-dependent 3',5'-cyclic nucleotide phosphodiesterase 1A.